A 179-amino-acid chain; its full sequence is Large ribosomal subunit protein uL10 (179 aa).

Belongs to the universal ribosomal protein uL10 family. Part of the ribosomal stalk of the 50S ribosomal subunit. The N-terminus interacts with L11 and the large rRNA to form the base of the stalk. The C-terminus forms an elongated spine to which L12 dimers bind in a sequential fashion forming a multimeric L10(L12)X complex.

Forms part of the ribosomal stalk, playing a central role in the interaction of the ribosome with GTP-bound translation factors. This is Large ribosomal subunit protein uL10 from Thermotoga petrophila (strain ATCC BAA-488 / DSM 13995 / JCM 10881 / RKU-1).